Reading from the N-terminus, the 664-residue chain is Phosphomethylpyrimidine synthase (664 aa).

Composition is skewed to polar residues over residues Met-1–Pro-10 and Ser-17–Lys-27. The interval Met-1–Ala-37 is disordered. Residues Asn-261, Met-290, Tyr-319, His-355, Ser-375–Gly-377, Asp-416–Arg-419, and Glu-455 each bind substrate. His-459 serves as a coordination point for Zn(2+). Position 482 (Tyr-482) interacts with substrate. His-523 serves as a coordination point for Zn(2+). Residues Cys-603, Cys-606, and Cys-611 each coordinate [4Fe-4S] cluster.

It belongs to the ThiC family. In terms of assembly, homodimer. [4Fe-4S] cluster is required as a cofactor.

It catalyses the reaction 5-amino-1-(5-phospho-beta-D-ribosyl)imidazole + S-adenosyl-L-methionine = 4-amino-2-methyl-5-(phosphooxymethyl)pyrimidine + CO + 5'-deoxyadenosine + formate + L-methionine + 3 H(+). It functions in the pathway cofactor biosynthesis; thiamine diphosphate biosynthesis. Catalyzes the synthesis of the hydroxymethylpyrimidine phosphate (HMP-P) moiety of thiamine from aminoimidazole ribotide (AIR) in a radical S-adenosyl-L-methionine (SAM)-dependent reaction. In Pectobacterium atrosepticum (strain SCRI 1043 / ATCC BAA-672) (Erwinia carotovora subsp. atroseptica), this protein is Phosphomethylpyrimidine synthase.